Reading from the N-terminus, the 594-residue chain is Aspartate--tRNA ligase (594 aa).

Glu171 lines the L-aspartate pocket. An aspartate region spans residues 195-198 (QLFK). Residue Arg217 coordinates L-aspartate. Residues 217–219 (RDE) and Gln226 contribute to the ATP site. L-aspartate is bound at residue His449. An ATP-binding site is contributed by Glu483. Arg490 contacts L-aspartate. 535-538 (GLDR) provides a ligand contact to ATP.

This sequence belongs to the class-II aminoacyl-tRNA synthetase family. Type 1 subfamily. As to quaternary structure, homodimer.

It localises to the cytoplasm. It carries out the reaction tRNA(Asp) + L-aspartate + ATP = L-aspartyl-tRNA(Asp) + AMP + diphosphate. Its function is as follows. Catalyzes the attachment of L-aspartate to tRNA(Asp) in a two-step reaction: L-aspartate is first activated by ATP to form Asp-AMP and then transferred to the acceptor end of tRNA(Asp). The protein is Aspartate--tRNA ligase of Proteus mirabilis (strain HI4320).